Consider the following 176-residue polypeptide: NAD(P)H-quinone oxidoreductase subunit 6, chloroplastic (176 aa).

5 helical membrane passes run 10-30 (FLLV…VLLP), 32-52 (PIYS…FYIL), 61-81 (AQLL…VMFM), 92-112 (LWTV…ISLI), and 152-172 (FFLP…GAIA).

It belongs to the complex I subunit 6 family. In terms of assembly, NDH is composed of at least 16 different subunits, 5 of which are encoded in the nucleus.

It localises to the plastid. Its subcellular location is the chloroplast thylakoid membrane. The catalysed reaction is a plastoquinone + NADH + (n+1) H(+)(in) = a plastoquinol + NAD(+) + n H(+)(out). The enzyme catalyses a plastoquinone + NADPH + (n+1) H(+)(in) = a plastoquinol + NADP(+) + n H(+)(out). Its function is as follows. NDH shuttles electrons from NAD(P)H:plastoquinone, via FMN and iron-sulfur (Fe-S) centers, to quinones in the photosynthetic chain and possibly in a chloroplast respiratory chain. The immediate electron acceptor for the enzyme in this species is believed to be plastoquinone. Couples the redox reaction to proton translocation, and thus conserves the redox energy in a proton gradient. The protein is NAD(P)H-quinone oxidoreductase subunit 6, chloroplastic (ndhG) of Solanum lycopersicum (Tomato).